The primary structure comprises 433 residues: Homogentisate 1,2-dioxygenase (433 aa).

The Proton acceptor role is filled by histidine 288. 2 residues coordinate Fe cation: histidine 331 and glutamate 337. Homogentisate-binding residues include tyrosine 346 and histidine 367. Residue histidine 367 participates in Fe cation binding.

The protein belongs to the homogentisate dioxygenase family. As to quaternary structure, hexamer; dimer of trimers. It depends on Fe cation as a cofactor.

The catalysed reaction is homogentisate + O2 = 4-maleylacetoacetate + H(+). It participates in amino-acid degradation; L-phenylalanine degradation; acetoacetate and fumarate from L-phenylalanine: step 4/6. Its function is as follows. Involved in the catabolism of homogentisate (2,5-dihydroxyphenylacetate or 2,5-OH-PhAc), a central intermediate in the degradation of phenylalanine and tyrosine. Catalyzes the oxidative ring cleavage of the aromatic ring of homogentisate to yield maleylacetoacetate. The protein is Homogentisate 1,2-dioxygenase of Pseudomonas putida (strain W619).